The following is a 496-amino-acid chain: Probable cytosol aminopeptidase (496 aa).

Mn(2+)-binding residues include lysine 268 and aspartate 273. Lysine 280 is a catalytic residue. 3 residues coordinate Mn(2+): aspartate 291, aspartate 350, and glutamate 352. Arginine 354 is an active-site residue.

It belongs to the peptidase M17 family. Mn(2+) is required as a cofactor.

The protein localises to the cytoplasm. The enzyme catalyses Release of an N-terminal amino acid, Xaa-|-Yaa-, in which Xaa is preferably Leu, but may be other amino acids including Pro although not Arg or Lys, and Yaa may be Pro. Amino acid amides and methyl esters are also readily hydrolyzed, but rates on arylamides are exceedingly low.. The catalysed reaction is Release of an N-terminal amino acid, preferentially leucine, but not glutamic or aspartic acids.. Its function is as follows. Presumably involved in the processing and regular turnover of intracellular proteins. Catalyzes the removal of unsubstituted N-terminal amino acids from various peptides. In Thioalkalivibrio sulfidiphilus (strain HL-EbGR7), this protein is Probable cytosol aminopeptidase.